Reading from the N-terminus, the 1254-residue chain is Juxtamembrane domain-associated catenin (1254 aa).

Disordered stretches follow at residues 1-38 (MISSGWMQEMEPIPEEGTEADGSEWGAMSDTAKRTMRK), 84-106 (AGPTSARGSSYSYSYESHYDNPP), and 145-209 (PYSN…SAPG). The segment covering 12 to 22 (PIPEEGTEADG) has biased composition (acidic residues). Residues 145–157 (PYSNIDFDSSGLP) are compositionally biased toward polar residues. Fibronectin type-III domains lie at 207–302 (APGV…IPIS), 315–411 (APGR…IRPA), 428–518 (PPGQ…LRPT), and 530–624 (ILEA…IEPS). Residues 412–433 (APQRHVPARKVSESVQPPGQPQ) form a disordered region. Residues 662-685 (MVRESPPLPERDDSPPPLRRANNN) form a disordered region. 5 ARM repeats span residues 733–775 (GGIP…AVME), 777–820 (DGVR…ESAT), 874–922 (NLIE…YDPA), 969–1012 (HVVK…RAAV), and 1016–1058 (KGLP…KYAL). Residues 920 to 960 (DPAAAHSSSSKNMKHVASPKPEKKKKDKEKKKDKNPKNIVT) form a disordered region. A disordered region spans residues 1159 to 1254 (GTARRGDSST…GGGNIDDSWV (96 aa)). A compositionally biased stretch (polar residues) spans 1166–1176 (SSTLARPISSQ). Positions 1177 to 1187 (GRERPSMHQLD) are enriched in basic and acidic residues.

Belongs to the beta-catenin family. In terms of assembly, associated with the catenin-cadherin complex consisting of hmr-1, hmp-1 and hmp-2. Interacts with hmr-1. Interacts with picc-1. In terms of tissue distribution, epidermal cells.

The protein resides in the cell junction. It localises to the adherens junction. The protein localises to the nucleus. Its function is as follows. May act as a positive modulator of hmr-1 function during epidermal morphogenesis. Required for proper localization of other junctional components, such as pac-1. In Caenorhabditis elegans, this protein is Juxtamembrane domain-associated catenin (jac-1).